Consider the following 158-residue polypeptide: Endoribonuclease YbeY (158 aa).

Zn(2+) contacts are provided by His-120, His-124, and His-130.

Belongs to the endoribonuclease YbeY family. The cofactor is Zn(2+).

It localises to the cytoplasm. Single strand-specific metallo-endoribonuclease involved in late-stage 70S ribosome quality control and in maturation of the 3' terminus of the 16S rRNA. The protein is Endoribonuclease YbeY of Spiroplasma citri.